Here is a 276-residue protein sequence, read N- to C-terminus: Carbonic anhydrase Nec1 (276 aa).

The first 27 residues, 1 to 27 (MKMINSIFTHGSLIILLLLFHSISIKA), serve as a signal peptide directing secretion. In terms of domain architecture, Alpha-carbonic anhydrase spans 34–270 (REFDYLEGSE…LNHREVQLHC (237 aa)). A disulfide bridge connects residues Cys59 and Cys220. His98 acts as the Proton acceptor in catalysis. Zn(2+) contacts are provided by His124 and His126. Asn134 carries an N-linked (GlcNAc...) asparagine glycan. A Zn(2+)-binding site is contributed by His143. A substrate binding region spans residues 216-217 (TT).

Belongs to the alpha-class carbonic anhydrase family. Homodimer. The cofactor is Zn(2+). Confined to nectaries.

The catalysed reaction is hydrogencarbonate + H(+) = CO2 + H2O. It participates in one-carbon metabolism. Its function is as follows. Involved in the production of blood-red nectar containing the alkaloid nesocodin and that serves as a visual attractant for pollinator visitation, including vertebrates such as Phelsuma geckos. The nectar is initially acidic and pale yellow, but slowly becomes alkaline before turning into red within 24 hours. Together with NEC2 and NEC3, facilitates the condensation of sinapaldehyde ((E)-3,5-dimethoxy-4-hydroxycinnamaldehyde) and proline to form nesocodin, a pigment with a stable imine bond. Mediates the alkalinization (pH increase) of the flower nectar by catalyzing the reversible hydration of carbon dioxide. This chain is Carbonic anhydrase Nec1, found in Nesocodon mauritianus (Blue Mauritius bellflower).